A 118-amino-acid polypeptide reads, in one-letter code: Large ribosomal subunit protein bL19 (118 aa).

The protein belongs to the bacterial ribosomal protein bL19 family.

This protein is located at the 30S-50S ribosomal subunit interface and may play a role in the structure and function of the aminoacyl-tRNA binding site. This is Large ribosomal subunit protein bL19 from Helicobacter pylori (strain HPAG1).